The chain runs to 534 residues: Lysophosphatidylcholine acyltransferase 1 (534 aa).

A disordered region spans residues 1 to 25; it reads MRLRGRGPRAAPSSSSGAGDARRLA. Residues 1–57 lie on the Cytoplasmic side of the membrane; sequence MRLRGRGPRAAPSSSSGAGDARRLAPPGRNPFVHELRLSALQKAQVAFMTLTLFPIR. The span at 8–19 shows a compositional bias: low complexity; that stretch reads PRAAPSSSSGAG. The helical; Signal-anchor for type II membrane protein transmembrane segment at 58–78 threads the bilayer; it reads LLFAAFMMLLAWPFALVASLG. Residues 79-534 lie on the Lumenal side of the membrane; the sequence is PPDKEPEQPL…GRKNSCKKVD (456 aa). The HXXXXD motif signature appears at 135–140; the sequence is HSSYFD. EF-hand domains follow at residues 379–414 and 451–486; these read PVSD…VCRP and ISEL…YPDF. Ca(2+)-binding residues include aspartate 392, serine 394, glutamate 398, and glutamate 403. The short motif at 531–534 is the Di-lysine motif element; it reads KKVD.

This sequence belongs to the 1-acyl-sn-glycerol-3-phosphate acyltransferase family. In terms of tissue distribution, enriched in alveolar type II cells of lung. Also highly expressed in stomach.

It localises to the endoplasmic reticulum membrane. The protein localises to the golgi apparatus membrane. Its subcellular location is the cell membrane. The protein resides in the lipid droplet. The enzyme catalyses a 1-acyl-sn-glycero-3-phosphocholine + an acyl-CoA = a 1,2-diacyl-sn-glycero-3-phosphocholine + CoA. It carries out the reaction a 1-O-alkyl-sn-glycero-3-phosphocholine + acetyl-CoA = a 1-O-alkyl-2-acetyl-sn-glycero-3-phosphocholine + CoA. The catalysed reaction is a 1-acyl-sn-glycero-3-phosphate + an acyl-CoA = a 1,2-diacyl-sn-glycero-3-phosphate + CoA. It catalyses the reaction a 1-O-(1Z-alkenyl)-sn-glycero-3-phosphocholine + an acyl-CoA = a 1-O-(1Z-alkenyl)-2-acyl-sn-glycero-3-phosphocholine + CoA. The enzyme catalyses 1-acyl-sn-glycero-3-phospho-(1'-sn-glycerol) + an acyl-CoA = a 1,2-diacyl-sn-glycero-3-phospho-(1'-sn-glycerol) + CoA. It carries out the reaction a 1-acyl-sn-glycero-3-phosphocholine + hexadecanoyl-CoA = 1-acyl-2-hexadecanoyl-sn-glycero-3-phosphocholine + CoA. The catalysed reaction is a 1-acyl-sn-glycero-3-phosphate + hexadecanoyl-CoA = 1-acyl-2-hexadecanoyl-sn-glycero-3-phosphate + CoA. It catalyses the reaction 1-acyl-sn-glycero-3-phospho-(1'-sn-glycerol) + hexadecanoyl-CoA = 1-acyl-2-hexadecanoyl-sn-glycero-3-phospho-(1'-sn-glycerol) + CoA. The enzyme catalyses 1-hexadecanoyl-sn-glycero-3-phosphocholine + hexadecanoyl-CoA = 1,2-dihexadecanoyl-sn-glycero-3-phosphocholine + CoA. It carries out the reaction 1-O-hexadecyl-sn-glycero-3-phosphocholine + hexadecanoyl-CoA = 1-O-hexadecyl-2-hexadecanoyl-sn-glycero-3-phosphocholine + CoA. The catalysed reaction is a 1-O-(1Z-alkenyl)-sn-glycero-3-phosphocholine + hexadecanoyl-CoA = 1-O-(1Z)-alkenyl-2-hexadecanoyl-sn-glycero-3-phosphocholine + CoA. It catalyses the reaction 1-hexadecanoyl-sn-glycero-3-phospho-(1'-sn-glycerol) + hexadecanoyl-CoA = 1,2-dihexadecanoyl-sn-glycero-3-phospho-(1'-sn-glycerol) + CoA. The enzyme catalyses 1-dodecanoyl-sn-glycero-3-phosphocholine + hexadecanoyl-CoA = 1-dodecanoyl-2-hexadecanoyl-sn-glycero-3-phosphocholine + CoA. It carries out the reaction 1-tetradecanoyl-sn-glycero-3-phosphocholine + hexadecanoyl-CoA = 1-tetradecanoyl-2-hexadecanoyl-sn-glycero-3-phosphocholine + CoA. The catalysed reaction is 1-O-octadecyl-sn-glycero-3-phosphocholine + hexadecanoyl-CoA = 1-O-octadecyl-2-hexadecanoyl-sn-glycero-3-phosphocholine + CoA. It catalyses the reaction 1-octadecanoyl-sn-glycero-3-phosphocholine + hexadecanoyl-CoA = 1-octadecanoyl-2-hexadecanoyl-sn-glycero-3-phosphocholine + CoA. The enzyme catalyses 1-(9Z-octadecenoyl)-sn-glycero-3-phosphocholine + hexadecanoyl-CoA = 1-(9Z-octadecenoyl)-2-hexadecanoyl-sn-glycero-3-phosphocholine + CoA. It carries out the reaction 1-eicosanoyl-sn-glycero-3-phosphocholine + hexadecanoyl-CoA = 1-eicosanoyl-2-hexadecanoyl-sn-glycero-3-phosphocholine + CoA. The catalysed reaction is hexanoyl-CoA + 1-hexadecanoyl-sn-glycero-3-phosphocholine = 1-hexadecanoyl-2-hexanoyl-sn-glycero-3-phosphocholine + CoA. It catalyses the reaction octanoyl-CoA + 1-hexadecanoyl-sn-glycero-3-phosphocholine = 1-hexadecanoyl-2-octanoyl-sn-glycero-3-phosphocholine + CoA. The enzyme catalyses decanoyl-CoA + 1-hexadecanoyl-sn-glycero-3-phosphocholine = 1-hexadecanoyl-2-decanoyl-sn-glycero-3-phosphocholine + CoA. It carries out the reaction dodecanoyl-CoA + 1-hexadecanoyl-sn-glycero-3-phosphocholine = 1-hexadecanoyl-2-dodecanoyl-sn-glycero-3-phosphocholine + CoA. The catalysed reaction is tetradecanoyl-CoA + 1-hexadecanoyl-sn-glycero-3-phosphocholine = 1-hexadecanoyl-2-tetradecanoyl-sn-glycero-3-phosphocholine + CoA. It catalyses the reaction 1-hexadecanoyl-sn-glycero-3-phosphocholine + (9Z)-octadecenoyl-CoA = 1-hexadecanoyl-2-(9Z-octadecenoyl)-sn-glycero-3-phosphocholine + CoA. The enzyme catalyses (9Z,12Z)-octadecadienoyl-CoA + 1-hexadecanoyl-sn-glycero-3-phosphocholine = 1-hexadecanoyl-2-(9Z,12Z-octadecadienoyl)-sn-glycero-3-phosphocholine + CoA. It carries out the reaction (4Z,7Z,10Z,13Z,16Z,19Z)-docosahexaenoyl-CoA + 1-hexadecanoyl-sn-glycero-3-phosphocholine = 1-hexadecanoyl-2-(4Z,7Z,10Z,13Z,16Z,19Z-docosahexaenoyl)-sn-glycero-3-phosphocholine + CoA. The catalysed reaction is 1-hexadecanoyl-sn-glycero-3-phosphocholine + acetyl-CoA = 1-hexadecanoyl-2-acetyl-sn-glycero-3-phosphocholine + CoA. It catalyses the reaction eicosanoyl-CoA + 1-hexadecanoyl-sn-glycero-3-phosphocholine = 1-hexadecanoyl-2-eicosanoyl-sn-glycero-3-phosphocholine + CoA. The enzyme catalyses 1-O-hexadecyl-sn-glycero-3-phosphocholine + acetyl-CoA = 1-O-hexadecyl-2-acetyl-sn-glycero-3-phosphocholine + CoA. The protein operates within lipid metabolism; phospholipid metabolism. Its activity is regulated as follows. Activity is stimulated by Mg(2+) or Mn(2+). Its function is as follows. Exhibits acyltransferase activity. Exhibits acetyltransferase activity. Activity is calcium-independent. Catalyzes the conversion of lysophosphatidylcholine (1-acyl-sn-glycero-3-phosphocholine or LPC) into phosphatidylcholine (1,2-diacyl-sn-glycero-3-phosphocholine or PC). Catalyzes the conversion 1-acyl-sn-glycerol-3-phosphate (lysophosphatidic acid or LPA) into 1,2-diacyl-sn-glycerol-3-phosphate (phosphatidic acid or PA) by incorporating an acyl moiety at the sn-2 position of the glycerol backbone. Displays a clear preference for saturated fatty acyl-CoAs, and 1-myristoyl or 1-palmitoyl LPC as acyl donors and acceptors, respectively. Involved in platelet-activating factor (PAF) biosynthesis by catalyzing the conversion of the PAF precursor, 1-O-alkyl-sn-glycero-3-phosphocholine (lyso-PAF) into 1-O-alkyl-2-acetyl-sn-glycero-3-phosphocholine (PAF). May synthesize phosphatidylcholine in pulmonary surfactant, thereby playing a pivotal role in respiratory physiology. Involved in the regulation of lipid droplet number and size. In Rattus norvegicus (Rat), this protein is Lysophosphatidylcholine acyltransferase 1 (Lpcat1).